Reading from the N-terminus, the 749-residue chain is DNA topoisomerase 1 (749 aa).

Residues 1-110 form a disordered region; it reads MSDSEDVALS…PKKEDSVETD (110 aa). Residues 62-75 show a composition bias toward basic and acidic residues; that stretch reads LSKEKVNNKVKDEL. Residues 79–94 show a composition bias toward low complexity; it reads PVTPKKTPKISKTPVS. Residues 101–110 are compositionally biased toward basic and acidic residues; sequence PKKEDSVETD. Interaction with DNA stretches follow at residues 338-339, 401-406, and 493-495; these read KY, RAGGEK, and TAK. A Topo IB-type catalytic domain is found at 345 to 749; the sequence is NSSIKGISDM…IESTDENWRF (405 aa). Tyr-707 (O-(3'-phospho-DNA)-tyrosine intermediate) is an active-site residue.

The protein belongs to the type IB topoisomerase family.

It localises to the nucleus. Its subcellular location is the nucleolus. It is found in the nucleoplasm. The enzyme catalyses ATP-independent breakage of single-stranded DNA, followed by passage and rejoining.. In terms of biological role, releases the supercoiling and torsional tension of DNA introduced during the DNA replication and transcription by transiently cleaving and rejoining one strand of the DNA duplex. Introduces a single-strand break via transesterification at the specific target site 5'-[CT]CCTTp site in duplex DNA. The scissile phosphodiester is attacked by the catalytic tyrosine of the enzyme, resulting in the formation of a DNA-(3'-phosphotyrosyl)-enzyme intermediate and the expulsion of a 5'-OH DNA strand. The free DNA strand then undergoes passage around the unbroken strand thus removing DNA supercoils. Finally, in the religation step, the DNA 5'-OH attacks the covalent intermediate to expel the active-site tyrosine and restore the DNA phosphodiester backbone. The polypeptide is DNA topoisomerase 1 (TOP1) (Candidozyma auris (Yeast)).